Here is a 208-residue protein sequence, read N- to C-terminus: Ribonuclease HII (208 aa).

The RNase H type-2 domain occupies 1 to 205 (MIVVGIDEAG…LQEIAPNYYI (205 aa)). Positions 7, 8, and 104 each coordinate a divalent metal cation.

The protein belongs to the RNase HII family. Mn(2+) is required as a cofactor. Requires Mg(2+) as cofactor.

It localises to the cytoplasm. It catalyses the reaction Endonucleolytic cleavage to 5'-phosphomonoester.. Endonuclease that specifically degrades the RNA of RNA-DNA hybrids. This Sulfurisphaera tokodaii (strain DSM 16993 / JCM 10545 / NBRC 100140 / 7) (Sulfolobus tokodaii) protein is Ribonuclease HII.